A 160-amino-acid chain; its full sequence is Phosphopantetheine adenylyltransferase (160 aa).

S9 contacts substrate. ATP is bound by residues 9-10 (SF) and H17. The substrate site is built by K41, L73, and K87. Residues 88 to 90 (GLR), E98, and 123 to 129 (YSYLSSS) contribute to the ATP site.

This sequence belongs to the bacterial CoaD family. Homohexamer. The cofactor is Mg(2+).

It localises to the cytoplasm. The catalysed reaction is (R)-4'-phosphopantetheine + ATP + H(+) = 3'-dephospho-CoA + diphosphate. It participates in cofactor biosynthesis; coenzyme A biosynthesis; CoA from (R)-pantothenate: step 4/5. Reversibly transfers an adenylyl group from ATP to 4'-phosphopantetheine, yielding dephospho-CoA (dPCoA) and pyrophosphate. This chain is Phosphopantetheine adenylyltransferase, found in Clostridium tetani (strain Massachusetts / E88).